We begin with the raw amino-acid sequence, 180 residues long: ATP synthase subunit delta (180 aa).

Belongs to the ATPase delta chain family. In terms of assembly, F-type ATPases have 2 components, F(1) - the catalytic core - and F(0) - the membrane proton channel. F(1) has five subunits: alpha(3), beta(3), gamma(1), delta(1), epsilon(1). F(0) has three main subunits: a(1), b(2) and c(10-14). The alpha and beta chains form an alternating ring which encloses part of the gamma chain. F(1) is attached to F(0) by a central stalk formed by the gamma and epsilon chains, while a peripheral stalk is formed by the delta and b chains.

It localises to the cell membrane. Functionally, f(1)F(0) ATP synthase produces ATP from ADP in the presence of a proton or sodium gradient. F-type ATPases consist of two structural domains, F(1) containing the extramembraneous catalytic core and F(0) containing the membrane proton channel, linked together by a central stalk and a peripheral stalk. During catalysis, ATP synthesis in the catalytic domain of F(1) is coupled via a rotary mechanism of the central stalk subunits to proton translocation. In terms of biological role, this protein is part of the stalk that links CF(0) to CF(1). It either transmits conformational changes from CF(0) to CF(1) or is implicated in proton conduction. This is ATP synthase subunit delta from Mycoplasma mobile (strain ATCC 43663 / 163K / NCTC 11711) (Mesomycoplasma mobile).